We begin with the raw amino-acid sequence, 216 residues long: Ribosomal RNA small subunit methyltransferase G (216 aa).

S-adenosyl-L-methionine contacts are provided by residues G86, L91, 137–138 (VE), and R155.

The protein belongs to the methyltransferase superfamily. RNA methyltransferase RsmG family.

It is found in the cytoplasm. It carries out the reaction guanosine(527) in 16S rRNA + S-adenosyl-L-methionine = N(7)-methylguanosine(527) in 16S rRNA + S-adenosyl-L-homocysteine. In terms of biological role, specifically methylates the N7 position of guanine in position 527 of 16S rRNA. The polypeptide is Ribosomal RNA small subunit methyltransferase G (Lawsonia intracellularis (strain PHE/MN1-00)).